Consider the following 439-residue polypeptide: Adenylosuccinate synthetase (439 aa).

GTP-binding positions include 25–31 (GDEGKGK), 53–55 (GHT), and Lys-62. Asp-26 serves as the catalytic Proton acceptor. The Mg(2+) site is built by Asp-26 and Gly-53. Residues 26–29 (DEGK) and 51–54 (NAGH) each bind IMP. His-54 serves as the catalytic Proton donor. IMP contacts are provided by Thr-141, Arg-155, Asn-232, and Thr-247. Thr-307 serves as a coordination point for GTP. Residue 307 to 313 (TTTKRPR) coordinates substrate. Arg-311 serves as a coordination point for IMP. GTP is bound by residues Arg-313, 339–341 (KLD), and 425–427 (GVG).

It belongs to the adenylosuccinate synthetase family. Homodimer. Mg(2+) is required as a cofactor.

It is found in the cytoplasm. It carries out the reaction IMP + L-aspartate + GTP = N(6)-(1,2-dicarboxyethyl)-AMP + GDP + phosphate + 2 H(+). It participates in purine metabolism; AMP biosynthesis via de novo pathway; AMP from IMP: step 1/2. Functionally, plays an important role in the salvage pathway for purine nucleotide biosynthesis. Catalyzes the first commited step in the biosynthesis of AMP from IMP. The protein is Adenylosuccinate synthetase (ADSS) of Plasmodium berghei (strain Anka).